Reading from the N-terminus, the 869-residue chain is Valine--tRNA ligase (869 aa).

A 'HIGH' region motif is present at residues P51 to H61. Residues K523–S527 carry the 'KMSKS' region motif. K526 serves as a coordination point for ATP. A coiled-coil region spans residues E797–K869.

The protein belongs to the class-I aminoacyl-tRNA synthetase family. ValS type 1 subfamily. As to quaternary structure, monomer.

The protein localises to the cytoplasm. It carries out the reaction tRNA(Val) + L-valine + ATP = L-valyl-tRNA(Val) + AMP + diphosphate. Catalyzes the attachment of valine to tRNA(Val). As ValRS can inadvertently accommodate and process structurally similar amino acids such as threonine, to avoid such errors, it has a 'posttransfer' editing activity that hydrolyzes mischarged Thr-tRNA(Val) in a tRNA-dependent manner. The sequence is that of Valine--tRNA ligase from Malacoplasma penetrans (strain HF-2) (Mycoplasma penetrans).